The primary structure comprises 274 residues: Eukaryotic translation initiation factor 3 subunit G (274 aa).

The RRM domain maps to 192 to 270 (TAIRISNLSN…LILNVEWSKP (79 aa)).

Belongs to the eIF-3 subunit G family. In terms of assembly, component of the eukaryotic translation initiation factor 3 (eIF-3) complex.

The protein localises to the cytoplasm. Its function is as follows. RNA-binding component of the eukaryotic translation initiation factor 3 (eIF-3) complex, which is involved in protein synthesis of a specialized repertoire of mRNAs and, together with other initiation factors, stimulates binding of mRNA and methionyl-tRNAi to the 40S ribosome. The eIF-3 complex specifically targets and initiates translation of a subset of mRNAs involved in cell proliferation. This subunit can bind 18S rRNA. The polypeptide is Eukaryotic translation initiation factor 3 subunit G (Bombyx mori (Silk moth)).